Consider the following 161-residue polypeptide: 3-isopropylmalate dehydratase small subunit 1 (161 aa).

The protein belongs to the LeuD family. LeuD type 2 subfamily. As to quaternary structure, heterodimer of LeuC and LeuD.

It carries out the reaction (2R,3S)-3-isopropylmalate = (2S)-2-isopropylmalate. The protein operates within amino-acid biosynthesis; L-leucine biosynthesis; L-leucine from 3-methyl-2-oxobutanoate: step 2/4. Catalyzes the isomerization between 2-isopropylmalate and 3-isopropylmalate, via the formation of 2-isopropylmaleate. This Archaeoglobus fulgidus (strain ATCC 49558 / DSM 4304 / JCM 9628 / NBRC 100126 / VC-16) protein is 3-isopropylmalate dehydratase small subunit 1 (leuD1).